The chain runs to 188 residues: Elongation factor P-like protein (188 aa).

Belongs to the elongation factor P family.

The sequence is that of Elongation factor P-like protein from Aliivibrio fischeri (strain MJ11) (Vibrio fischeri).